A 559-amino-acid chain; its full sequence is DnaJ homolog subfamily C member 11 (559 aa).

Alanine 2 is subject to N-acetylalanine. In terms of domain architecture, J spans 14–82; it reads DYYSLLNVRR…QTRAIYDIYG (69 aa). Residue serine 204 is modified to Phosphoserine. The stretch at 415-457 forms a coiled coil; it reads QKEKELEKQRENTASDILQKKQEAEAAVRLMQESVRRIIEAEE.

The protein belongs to the DNAJC11 family. As to quaternary structure, associates with the mitochondrial contact site and cristae organizing system (MICOS) complex, composed of at least MICOS10/MIC10, CHCHD3/MIC19, CHCHD6/MIC25, APOOL/MIC27, IMMT/MIC60, APOO/MIC23/MIC26 and QIL1/MIC13. This complex was also known under the names MINOS or MitOS complex. The MICOS complex associates with mitochondrial outer membrane proteins SAMM50, MTX1 and MTX2 (together described as components of the mitochondrial outer membrane sorting assembly machinery (SAM) complex) and DNAJC11, mitochondrial inner membrane protein TMEM11 and with HSPA9. The MICOS and SAM complexes together with DNAJC11 are part of a large protein complex spanning both membranes termed the mitochondrial intermembrane space bridging (MIB) complex.

Its subcellular location is the mitochondrion. It localises to the mitochondrion outer membrane. Its function is as follows. Required for mitochondrial inner membrane organization. Seems to function through its association with the MICOS complex and the mitochondrial outer membrane sorting assembly machinery (SAM) complex. The polypeptide is DnaJ homolog subfamily C member 11 (Dnajc11) (Mus musculus (Mouse)).